Reading from the N-terminus, the 185-residue chain is Ribosome-recycling factor (185 aa).

This sequence belongs to the RRF family.

The protein localises to the cytoplasm. In terms of biological role, responsible for the release of ribosomes from messenger RNA at the termination of protein biosynthesis. May increase the efficiency of translation by recycling ribosomes from one round of translation to another. The sequence is that of Ribosome-recycling factor from Coxiella burnetii (strain CbuK_Q154) (Coxiella burnetii (strain Q154)).